Consider the following 522-residue polypeptide: Amine oxidase [flavin-containing] (522 aa).

At 1–492 (MTANAYDVIV…WERNLPSVGG (492 aa)) the chain is on the cytoplasmic side. Cysteine 398 bears the S-8alpha-FAD cysteine mark. The helical; Anchor for type IV membrane protein transmembrane segment at 493–513 (FLKFMGVSSFLAAATAAGLVA) threads the bilayer. The Mitochondrial intermembrane portion of the chain corresponds to 514-522 (CKKGLLPRC).

It belongs to the flavin monoamine oxidase family. Monomer, homo- or heterodimer (containing two subunits of similar size). Each subunit contains a covalently bound flavin. Enzymatically active as monomer. It depends on FAD as a cofactor. Strongest expression in brain and intestine, followed by liver, heart and gill. Little expression in spleen, eye or muscle. In brain, highest activity in noradrenergic and serotonergic cell groups and those of the habenulointerpeduncular pathway; moderate levels in dopaminergic cell clusters.

It is found in the mitochondrion outer membrane. The catalysed reaction is a secondary aliphatic amine + O2 + H2O = a primary amine + an aldehyde + H2O2. It carries out the reaction a primary methyl amine + O2 + H2O = an aldehyde + H2O2 + NH4(+). It catalyses the reaction serotonin + O2 + H2O = (5-hydroxyindol-3-yl)acetaldehyde + H2O2 + NH4(+). The enzyme catalyses 2-phenylethylamine + O2 + H2O = 2-phenylacetaldehyde + H2O2 + NH4(+). The catalysed reaction is tyramine + O2 + H2O = (4-hydroxyphenyl)acetaldehyde + H2O2 + NH4(+). It carries out the reaction dopamine + O2 + H2O = 3,4-dihydroxyphenylacetaldehyde + H2O2 + NH4(+). It catalyses the reaction (R)-adrenaline + O2 + H2O = (R)-3,4-dihydroxymandelaldehyde + methylamine + H2O2. The enzyme catalyses (R)-noradrenaline + O2 + H2O = (R)-3,4-dihydroxymandelaldehyde + H2O2 + NH4(+). The catalysed reaction is kynuramine + O2 + H2O = 3-(2-aminophenyl)-3-oxopropanal + H2O2 + NH4(+). It carries out the reaction tryptamine + O2 + H2O = indole-3-acetaldehyde + H2O2 + NH4(+). With respect to regulation, inhibited by both clorgyline (selective MAOA inhibitor) and deprenyl (selective MAOB inhibitor). Functionally, catalyzes the oxidative deamination of biogenic and xenobiotic amines and has important functions in the metabolism of neuroactive and vasoactive amines in the central nervous system and peripheral tissues. Preferentially oxidizes serotonin and tyramine. Also catalyzes the oxidative deamination of kynuramine to 3-(2-aminophenyl)-3-oxopropanal that can spontaneously condense to 4-hydroxyquinoline. The sequence is that of Amine oxidase [flavin-containing] from Danio rerio (Zebrafish).